A 213-amino-acid chain; its full sequence is Ribonuclease HII (213 aa).

The RNase H type-2 domain occupies 1–206 (MICGVDEAGK…VSTLLAKKTQ (206 aa)). Residues aspartate 6, glutamate 7, and aspartate 101 each coordinate a divalent metal cation.

It belongs to the RNase HII family. The cofactor is Mn(2+). Requires Mg(2+) as cofactor.

It localises to the cytoplasm. It catalyses the reaction Endonucleolytic cleavage to 5'-phosphomonoester.. In terms of biological role, endonuclease that specifically degrades the RNA of RNA-DNA hybrids. This is Ribonuclease HII from Methanoregula boonei (strain DSM 21154 / JCM 14090 / 6A8).